Reading from the N-terminus, the 515-residue chain is 1-pyrroline-5-carboxylate dehydrogenase (515 aa).

Active-site residues include Glu286 and Cys320.

Belongs to the aldehyde dehydrogenase family. RocA subfamily.

It carries out the reaction L-glutamate 5-semialdehyde + NAD(+) + H2O = L-glutamate + NADH + 2 H(+). The protein operates within amino-acid degradation; L-proline degradation into L-glutamate; L-glutamate from L-proline: step 2/2. The polypeptide is 1-pyrroline-5-carboxylate dehydrogenase (rocA) (Bacillus subtilis (strain 168)).